A 130-amino-acid chain; its full sequence is Histidine triad nucleotide-binding protein 1 (130 aa).

Residues 22–130 (LFGKIIRKEI…GGRQLQWPPG (109 aa)) form the HIT domain. Residues 114–118 (HLHLH) carry the Histidine triad motif motif.

The polypeptide is Histidine triad nucleotide-binding protein 1 (hint-1) (Caenorhabditis elegans).